The sequence spans 676 residues: Lon-like protease BrxL (676 aa).

Belongs to the BrxL family.

In terms of biological role, BREX systems (bacteriophage exclusion) provide immunity against bacteriophage. Part of a type 1 BREX system. This system allows phage adsorption but prevents phage DNA replication, without degradation of the phage DNA. Methylation of bacterial DNA by PglX probably guides self/non-self discrimination. When the brxA-brxB-brxC-pglX and pglZ-brxL operons are transformed into a susceptible B.subtilis strain (BEST7003) they confer resistance to bacteriophages SPbeta, SP16, Zeta, phi3T and SP02 and partial protection to phages SP01 and SP82G (these include lytic and temperate phage). They do not protect against phages phi105, rho10 or rho14. Additionally confers a very slight reduction in efficiency of plasmid transformation. The sequence is that of Lon-like protease BrxL from Bacillus cereus (strain H3081.97).